The following is a 690-amino-acid chain: Calpain-9 (690 aa).

Positions 1-23 (MPYLHRSLRPQPQPVPGDARTIH) are disordered. The Calpain catalytic domain occupies 42–337 (LFEDADFPAS…FDKVEICNLT (296 aa)). 3 residues coordinate Ca(2+): leucine 81, glycine 83, and aspartate 88. Residue cysteine 97 is part of the active site. Glutamate 167 is a Ca(2+) binding site. Residues histidine 254 and asparagine 278 contribute to the active site. Ca(2+) is bound by residues glutamate 284, aspartate 291, leucine 312, aspartate 314, and glutamate 316. Residues 338–521 (PDALEDSALH…PQEEETEEEQ (184 aa)) are domain III. EF-hand domains follow at residues 518-552 (EEEQ…VLQK), 561-589 (LSLL…FRVF), and 591-626 (DKLK…AGFQ). Residues 522–690 (QFRALFQRVA…NEFISLTMNI (169 aa)) form a domain IV region. The Ca(2+) site is built by aspartate 574, serine 576, asparagine 578, lysine 580, glutamate 585, aspartate 604, aspartate 606, serine 608, threonine 610, and glutamate 615.

Belongs to the peptidase C2 family. In terms of tissue distribution, predominantly expressed in stomach and small intestine, although low levels of expression in other organs.

Its subcellular location is the cytoplasm. Its function is as follows. Calcium-regulated non-lysosomal thiol-protease. The polypeptide is Calpain-9 (Capn9) (Mus musculus (Mouse)).